The chain runs to 216 residues: Uracil phosphoribosyltransferase (216 aa).

5-phospho-alpha-D-ribose 1-diphosphate contacts are provided by residues R85, R110, and 135–143 (DPMVATGYS). Residues I200 and 205–207 (GDA) each bind uracil. Residue D206 coordinates 5-phospho-alpha-D-ribose 1-diphosphate.

It belongs to the UPRTase family. Mg(2+) is required as a cofactor.

It catalyses the reaction UMP + diphosphate = 5-phospho-alpha-D-ribose 1-diphosphate + uracil. It functions in the pathway pyrimidine metabolism; UMP biosynthesis via salvage pathway; UMP from uracil: step 1/1. Its activity is regulated as follows. Allosterically activated by GTP. Catalyzes the conversion of uracil and 5-phospho-alpha-D-ribose 1-diphosphate (PRPP) to UMP and diphosphate. In Burkholderia ambifaria (strain MC40-6), this protein is Uracil phosphoribosyltransferase.